A 207-amino-acid chain; its full sequence is Chloramphenicol acetyltransferase (207 aa).

H186 (proton acceptor) is an active-site residue.

This sequence belongs to the chloramphenicol acetyltransferase family. In terms of assembly, homotrimer.

The catalysed reaction is chloramphenicol + acetyl-CoA = chloramphenicol 3-acetate + CoA. Functionally, this enzyme is an effector of chloramphenicol resistance in bacteria. This Campylobacter coli protein is Chloramphenicol acetyltransferase.